We begin with the raw amino-acid sequence, 449 residues long: Metacaspase-1 (449 aa).

Positions 1 to 132 (MFPGQGRHTY…YSRPPTNQQS (132 aa)) are disordered. Residues 10-26 (YGGQQQLLQLQQYNYGP) are compositionally biased toward low complexity. Residues 27–55 (PQGPPPNGYGPPPGPPPNGYGPPPGPPPQ) show a composition bias toward pro residues. Residues 56 to 66 (NSWGYGNPSGT) show a composition bias toward polar residues. Composition is skewed to low complexity over residues 67-91 (QSSNQQRYQGQQSGQQNYNGGYQRP) and 98-112 (QSGNQRGQPGQNGEP). Residues 119–132 (GSGQYSRPPTNQQS) show a composition bias toward polar residues. Active-site residues include H232 and C293.

This sequence belongs to the peptidase C14B family.

Functionally, involved in cell death (apoptosis). The sequence is that of Metacaspase-1 (MCA1) from Lodderomyces elongisporus (strain ATCC 11503 / CBS 2605 / JCM 1781 / NBRC 1676 / NRRL YB-4239) (Yeast).